The chain runs to 41 residues: Large ribosomal subunit protein bL32c (41 aa).

It belongs to the bacterial ribosomal protein bL32 family.

It is found in the plastid. In Helicosporidium sp. subsp. Simulium jonesii (Green alga), this protein is Large ribosomal subunit protein bL32c (rpl32).